The primary structure comprises 130 residues: Glycine cleavage system H protein (130 aa).

The Lipoyl-binding domain maps to 24–106; that stretch reads TATVGITDFA…YGDGWMFKVK (83 aa). Lys65 carries the post-translational modification N6-lipoyllysine.

The protein belongs to the GcvH family. In terms of assembly, the glycine cleavage system is composed of four proteins: P, T, L and H. (R)-lipoate is required as a cofactor.

Functionally, the glycine cleavage system catalyzes the degradation of glycine. The H protein shuttles the methylamine group of glycine from the P protein to the T protein. In Marinobacter nauticus (strain ATCC 700491 / DSM 11845 / VT8) (Marinobacter aquaeolei), this protein is Glycine cleavage system H protein.